A 265-amino-acid polypeptide reads, in one-letter code: Acetylglutamate kinase (265 aa).

Substrate contacts are provided by residues Gly-41 to Gly-42, Arg-63, and Asn-156.

This sequence belongs to the acetylglutamate kinase family. ArgB subfamily.

The protein resides in the cytoplasm. The enzyme catalyses N-acetyl-L-glutamate + ATP = N-acetyl-L-glutamyl 5-phosphate + ADP. The protein operates within amino-acid biosynthesis; L-arginine biosynthesis; N(2)-acetyl-L-ornithine from L-glutamate: step 2/4. Catalyzes the ATP-dependent phosphorylation of N-acetyl-L-glutamate. The polypeptide is Acetylglutamate kinase (Oceanobacillus iheyensis (strain DSM 14371 / CIP 107618 / JCM 11309 / KCTC 3954 / HTE831)).